Reading from the N-terminus, the 162-residue chain is ATP synthase subunit b', chloroplastic (162 aa).

The chain crosses the membrane as a helical span at residues 26 to 46 (ATLPLQALQFILLTVLLTFIF).

This sequence belongs to the ATPase B chain family. In terms of assembly, F-type ATPases have 2 components, F(1) - the catalytic core - and F(0) - the membrane proton channel. F(1) has five subunits: alpha(3), beta(3), gamma(1), delta(1), epsilon(1). F(0) has four main subunits: a(1), b(1), b'(1) and c(10-14). The alpha and beta chains form an alternating ring which encloses part of the gamma chain. F(1) is attached to F(0) by a central stalk formed by the gamma and epsilon chains, while a peripheral stalk is formed by the delta, b and b' chains.

Its subcellular location is the plastid. The protein localises to the chloroplast thylakoid membrane. Functionally, f(1)F(0) ATP synthase produces ATP from ADP in the presence of a proton or sodium gradient. F-type ATPases consist of two structural domains, F(1) containing the extramembraneous catalytic core and F(0) containing the membrane proton channel, linked together by a central stalk and a peripheral stalk. During catalysis, ATP synthesis in the catalytic domain of F(1) is coupled via a rotary mechanism of the central stalk subunits to proton translocation. Its function is as follows. Component of the F(0) channel, it forms part of the peripheral stalk, linking F(1) to F(0). The b'-subunit is a diverged and duplicated form of b found in plants and photosynthetic bacteria. The sequence is that of ATP synthase subunit b', chloroplastic from Emiliania huxleyi (Coccolithophore).